The sequence spans 156 residues: SsrA-binding protein (156 aa).

The protein belongs to the SmpB family.

It is found in the cytoplasm. Functionally, required for rescue of stalled ribosomes mediated by trans-translation. Binds to transfer-messenger RNA (tmRNA), required for stable association of tmRNA with ribosomes. tmRNA and SmpB together mimic tRNA shape, replacing the anticodon stem-loop with SmpB. tmRNA is encoded by the ssrA gene; the 2 termini fold to resemble tRNA(Ala) and it encodes a 'tag peptide', a short internal open reading frame. During trans-translation Ala-aminoacylated tmRNA acts like a tRNA, entering the A-site of stalled ribosomes, displacing the stalled mRNA. The ribosome then switches to translate the ORF on the tmRNA; the nascent peptide is terminated with the 'tag peptide' encoded by the tmRNA and targeted for degradation. The ribosome is freed to recommence translation, which seems to be the essential function of trans-translation. The protein is SsrA-binding protein of Staphylococcus epidermidis (strain ATCC 35984 / DSM 28319 / BCRC 17069 / CCUG 31568 / BM 3577 / RP62A).